The chain runs to 415 residues: Procollagen C-endopeptidase enhancer 2 (415 aa).

Residues 1–23 form the signal peptide; that stretch reads MRGANAWAPLCLLLAAATQLSRQ. 7 disulfides stabilise this stretch: Cys33–Cys59, Cys86–Cys107, Cys154–Cys181, Cys208–Cys231, Cys297–Cys364, Cys301–Cys367, and Cys312–Cys415. CUB domains lie at 33–144 and 154–268; these read CGGI…FSAA and CGGL…YIFR. An NTR domain is found at 297 to 415; that stretch reads CQQKCRRTGT…LLDALKNKQC (119 aa). Asn355 carries an N-linked (GlcNAc...) asparagine glycan.

In terms of assembly, interacts with heparin with high affinity, and type I or II collagen. Post-translationally, O-glycosylated; contains sialic acid. Highly expressed in the heart, trabecular meshwork, pituitary gland, bladder, mammary gland, trachea and placenta and weakly expressed in the brain. Expressed in cartilage.

It is found in the secreted. Functionally, binds to the C-terminal propeptide of types I and II procollagens and may enhance the cleavage of that propeptide by BMP1. This Homo sapiens (Human) protein is Procollagen C-endopeptidase enhancer 2 (PCOLCE2).